Here is a 368-residue protein sequence, read N- to C-terminus: Phosphate acyltransferase (368 aa).

It belongs to the PlsX family. Homodimer. Probably interacts with PlsY.

It localises to the cytoplasm. It catalyses the reaction a fatty acyl-[ACP] + phosphate = an acyl phosphate + holo-[ACP]. It participates in lipid metabolism; phospholipid metabolism. Functionally, catalyzes the reversible formation of acyl-phosphate (acyl-PO(4)) from acyl-[acyl-carrier-protein] (acyl-ACP). This enzyme utilizes acyl-ACP as fatty acyl donor, but not acyl-CoA. This is Phosphate acyltransferase from Herpetosiphon aurantiacus (strain ATCC 23779 / DSM 785 / 114-95).